The sequence spans 148 residues: Snaclec 8 (148 aa).

The N-terminal stretch at 1-23 (MGRFIFVSFSLLVVFFSLSGTEA) is a signal peptide. Residues 34 to 148 (YDQNCYKAFE…DTQFRLQEPG (115 aa)) form the C-type lectin domain.

Belongs to the snaclec family. As to quaternary structure, heterodimer; disulfide-linked. Post-translationally, contains disulfide bonds. Expressed by the venom gland.

The protein localises to the secreted. Interferes with one step of hemostasis (modulation of platelet aggregation, or coagulation cascade, for example). The polypeptide is Snaclec 8 (Echis carinatus sochureki (Saw-scaled viper)).